A 104-amino-acid chain; its full sequence is L-rhamnose mutarotase (104 aa).

Y18 is a substrate binding site. Residue H22 is the Proton donor of the active site. Substrate is bound by residues Y41 and 76 to 77 (WW).

This sequence belongs to the rhamnose mutarotase family. Homodimer.

The protein resides in the cytoplasm. The enzyme catalyses alpha-L-rhamnose = beta-L-rhamnose. It functions in the pathway carbohydrate metabolism; L-rhamnose metabolism. Its function is as follows. Involved in the anomeric conversion of L-rhamnose. The polypeptide is L-rhamnose mutarotase (Bacteroides thetaiotaomicron (strain ATCC 29148 / DSM 2079 / JCM 5827 / CCUG 10774 / NCTC 10582 / VPI-5482 / E50)).